We begin with the raw amino-acid sequence, 334 residues long: uncharacterized protein (334 aa).

Ser126 lines the substrate pocket. The Proton acceptor role is filled by Tyr151.

The protein belongs to the NAD(P)-dependent epimerase/dehydratase family. dTDP-glucose dehydratase subfamily.

This is an uncharacterized protein from Escherichia coli O111:H-.